We begin with the raw amino-acid sequence, 185 residues long: MTNPQDSKAIWHGTTVLAVRKNGKLVMLSDGQVSMGQTIMKGNARKVRRIAGGQILAGFAGATADAFTLFERLEAKLERFPDQLQRAAVELAKDWRTEKYLQKLEALLIVADKHSTLVITGAGDVLEPEHHVVSIGSGGNYALAAARGLYDYEEDAETIGRKAMQIAADICVYTNGHFSVETLEI.

Residue Thr14 is part of the active site. Positions 168, 171, and 174 each coordinate Na(+).

This sequence belongs to the peptidase T1B family. HslV subfamily. In terms of assembly, a double ring-shaped homohexamer of HslV is capped on each side by a ring-shaped HslU homohexamer. The assembly of the HslU/HslV complex is dependent on binding of ATP.

The protein localises to the cytoplasm. It carries out the reaction ATP-dependent cleavage of peptide bonds with broad specificity.. With respect to regulation, allosterically activated by HslU binding. Its function is as follows. Protease subunit of a proteasome-like degradation complex believed to be a general protein degrading machinery. The sequence is that of ATP-dependent protease subunit HslV from Hyphomonas neptunium (strain ATCC 15444).